The sequence spans 452 residues: Serine incorporator 2 (452 aa).

11 helical membrane-spanning segments follow: residues 5 to 25 (LGACSLLSCASCLCGSAPCIL), 41 to 61 (FFTVFLFLGVLVCVIMLSPGV), 96 to 116 (AVYRMCFAMAAFFFLFSLLMV), 131 to 151 (GFWFFKFLIFVGITVGAFYIP), 158 to 178 (IWFYFGVVGSFIFLLIQLLLL), 205 to 225 (LFFFTLLFYALSITAVALLFV), 236 to 256 (GKVFIGLNLTLCVCVSIVAIL), 266 to 286 (SGLLQASVITLYTMFVTWLAL), 319 to 339 (WDAPSIVGLVVFILCTVFISL), 387 to 407 (FFHLCLVLASVHIMMTLTNWY), and 426 to 446 (ICASWTGLLLYLWTLVAPLLL).

This sequence belongs to the TDE1 family.

The protein resides in the cell membrane. It carries out the reaction a 1,2-diacyl-sn-glycero-3-phospho-L-serine(in) = a 1,2-diacyl-sn-glycero-3-phospho-L-serine(out). The catalysed reaction is a 1,2-diacyl-sn-glycero-3-phosphocholine(in) = a 1,2-diacyl-sn-glycero-3-phosphocholine(out). The enzyme catalyses a 1,2-diacyl-sn-glycero-3-phosphoethanolamine(in) = a 1,2-diacyl-sn-glycero-3-phosphoethanolamine(out). In terms of biological role, non-ATP-dependent, non-specific lipid transporter for phosphatidylserine, phosphatidylcholine, and phosphatidylethanolamine. Functions as a scramblase that flips lipids in both directions across the membrane. In contrast to SERINC3 and SERINC5, has no effect on gammaretrovirus particles infectivity. The sequence is that of Serine incorporator 2 (SERINC2) from Bos taurus (Bovine).